The sequence spans 286 residues: Thymidylate synthase (286 aa).

Position 140-141 (140-141) interacts with dUMP; the sequence is RR. Catalysis depends on cysteine 161, which acts as the Nucleophile. DUMP is bound by residues 185–188, asparagine 196, and 226–228; these read RSND and HIY. (6R)-5,10-methylene-5,6,7,8-tetrahydrofolate is bound at residue aspartate 188. A (6R)-5,10-methylene-5,6,7,8-tetrahydrofolate-binding site is contributed by alanine 285.

Belongs to the thymidylate synthase family. Bacterial-type ThyA subfamily. As to quaternary structure, homodimer.

It is found in the cytoplasm. The enzyme catalyses dUMP + (6R)-5,10-methylene-5,6,7,8-tetrahydrofolate = 7,8-dihydrofolate + dTMP. It functions in the pathway pyrimidine metabolism; dTTP biosynthesis. Functionally, catalyzes the reductive methylation of 2'-deoxyuridine-5'-monophosphate (dUMP) to 2'-deoxythymidine-5'-monophosphate (dTMP) while utilizing 5,10-methylenetetrahydrofolate (mTHF) as the methyl donor and reductant in the reaction, yielding dihydrofolate (DHF) as a by-product. This enzymatic reaction provides an intracellular de novo source of dTMP, an essential precursor for DNA biosynthesis. The sequence is that of Thymidylate synthase from Streptococcus thermophilus (strain ATCC BAA-250 / LMG 18311).